We begin with the raw amino-acid sequence, 997 residues long: Sarcoplasmic/endoplasmic reticulum calcium ATPase 2 (997 aa).

Residues 1-48 lie on the Cytoplasmic side of the membrane; sequence MENAHTKTVEEVLGYFGVNESTGLSLEQVKKLKERWGSNELPAEEGKT. The residue at position 38 (Ser38) is a Phosphoserine. A helical membrane pass occupies residues 49 to 69; it reads LLELVIEQFEDLLVRILLLAA. The Lumenal segment spans residues 70-89; sequence CISFVLAWFEEGEETITAFV. The chain crosses the membrane as a helical span at residues 90-110; that stretch reads EPFVILLILVANAIVGVWQER. Residues 111–253 lie on the Cytoplasmic side of the membrane; the sequence is NAENAIEALK…QERTPLQQKL (143 aa). The chain crosses the membrane as a helical span at residues 254–273; it reads DEFGEQLSKVISLICIAVWI. Residues 274-295 are Lumenal-facing; it reads INIGHFNDPVHGGSWIRGAIYY. A 3'-nitrotyrosine mark is found at Tyr294 and Tyr295. The helical transmembrane segment at 296–313 threads the bilayer; it reads FKIAVALAVAAIPEGLPA. Val304, Ala305, Ile307, and Glu309 together coordinate Ca(2+). At 314–756 the chain is on the cytoplasmic side; sequence VITTCLALGT…EEGRAIYNNM (443 aa). Asp351 acts as the 4-aspartylphosphate intermediate in catalysis. Mg(2+)-binding residues include Asp351 and Thr353. An ATP-binding site is contributed by Thr353. Phosphothreonine is present on Thr441. Positions 442, 489, and 514 each coordinate ATP. A Phosphoserine modification is found at Ser531. ATP is bound at residue Arg559. The segment at 575 to 594 is interaction with HAX1; it reads MNLEDSANFIKYETNLTFVG. The residue at position 580 (Ser580) is a Phosphoserine. ATP-binding residues include Thr624, Gly625, and Asp626. Phosphoserine is present on residues Ser661 and Ser663. Residues Arg677 and Lys683 each coordinate ATP. Asp702 contributes to the Mg(2+) binding site. Asn705 is a binding site for ATP. The chain crosses the membrane as a helical span at residues 757 to 776; it reads KQFIRYLISSNVGEVVCIFL. Residues Asn767 and Glu770 each coordinate Ca(2+). The Lumenal segment spans residues 777–786; the sequence is TAALGFPEAL. Residues 787 to 807 traverse the membrane as a helical segment; it reads IPVQLLWVNLVTDGLPATALG. The interaction with PLN stretch occupies residues 787 to 807; sequence IPVQLLWVNLVTDGLPATALG. The interaction with TMEM64 and PDIA3 stretch occupies residues 788–997; the sequence is PVQLLWVNLV…RNYLEPAILE (210 aa). The Ca(2+) site is built by Asn795, Thr798, and Asp799. Over 808–827 the chain is Cytoplasmic; the sequence is FNPPDLDIMNKPPRNPKEPL. The chain crosses the membrane as a helical span at residues 828–850; that stretch reads ISGWLFFRYLAIGCYVGAATVGA. Topologically, residues 851-896 are lumenal; it reads AAWWFIAADGGPRVSFYQLSHFLQCKDDNPDFEGVDCAIFESPYPM. Cys875 and Cys887 are joined by a disulfide. Residues 897–916 form a helical membrane-spanning segment; the sequence is TMALSVLVTIEMCNALNSLS. Glu907 serves as a coordination point for Ca(2+). The Cytoplasmic portion of the chain corresponds to 917–929; that stretch reads ENQSLLRMPPWEN. The helical transmembrane segment at 930–948 threads the bilayer; it reads IWLVGSICLSMSLHFLILY. The segment at 931 to 942 is interaction with PLN; that stretch reads WLVGSICLSMSL. Topologically, residues 949 to 963 are lumenal; that stretch reads VEPLPLIFQITPLNL. Residues 964-984 traverse the membrane as a helical segment; it reads TQWLMVLKISLPVILMDETLK. Over 985-997 the chain is Cytoplasmic; sequence FVARNYLEPAILE.

This sequence belongs to the cation transport ATPase (P-type) (TC 3.A.3) family. Type IIA subfamily. Interacts with sarcolipin (SLN); the interaction inhibits ATP2A2 Ca(2+) affinity. Interacts with phospholamban (PLN); the interaction inhibits ATP2A2 Ca(2+) affinity. Interacts with myoregulin (MRLN). Interacts with ARLN and ERLN; the interactions inhibit ATP2A2 Ca(2+) affinity. Interacts with STRIT1/DWORF; the interaction results in activation of ATP2A2. Interacts with the monomeric forms of SLN, PLN, ARLN, ERLN and STRI1/DWORF. Interacts with HAX1. Interacts with S100A8 and S100A9. Interacts with SLC35G1 and STIM1. Interacts with TMEM203. Interacts with TMEM64 and PDIA3. Interacts with TMX1. Interacts with TMX2. Interacts with VMP1; VMP1 competes with PLN and SLN to prevent them from forming an inhibitory complex with ATP2A2. Interacts with ULK1. Interacts with S100A1 in a Ca(2+)-dependent manner. Interacts with TUNAR. Interacts with FLVCR2; this interaction occurs in the absence of heme and promotes ATP2A2 proteasomal degradation; this complex is dissociated upon heme binding. Interacts with FNIP1. In terms of assembly, interacts with TRAM2 (via C-terminus). The cofactor is Mg(2+). In terms of processing, nitrated under oxidative stress. Nitration on the two tyrosine residues inhibits catalytic activity. Post-translationally, serotonylated on Gln residues by TGM2 in response to hypoxia, leading to its inactivation. In terms of tissue distribution, isoform 1 is expressed in the heart.

The protein localises to the endoplasmic reticulum membrane. It is found in the sarcoplasmic reticulum membrane. It catalyses the reaction Ca(2+)(in) + ATP + H2O = Ca(2+)(out) + ADP + phosphate + H(+). Has different conformational states with differential Ca2+ affinity. The E1 conformational state (active form) shows high Ca(2+) affinity, while the E2 state exhibits low Ca(2+) affinity. Binding of ATP allosterically increases its affinity for subsequent binding of Ca2+. Reversibly inhibited by phospholamban (PLN) at low calcium concentrations. PLN inhibits ATP2A2 Ca(2+) affinity by disrupting its allosteric activation by ATP. Inhibited by sarcolipin (SLN) and myoregulin (MRLN). The inhibition is blocked by VMP1. Enhanced by STRIT1/DWORF; STRIT1 increases activity by displacing sarcolipin (SLN), phospholamban (PLN) and myoregulin (MRLN). Stabilizes SERCA2 in its E2 state. This magnesium-dependent enzyme catalyzes the hydrolysis of ATP coupled with the translocation of calcium from the cytosol to the sarcoplasmic reticulum lumen. Involved in autophagy in response to starvation. Upon interaction with VMP1 and activation, controls ER-isolation membrane contacts for autophagosome formation. Also modulates ER contacts with lipid droplets, mitochondria and endosomes. In coordination with FLVCR2 mediates heme-stimulated switching from mitochondrial ATP synthesis to thermogenesis. Functionally, involved in the regulation of the contraction/relaxation cycle. Acts as a regulator of TNFSF11-mediated Ca(2+) signaling pathways via its interaction with TMEM64 which is critical for the TNFSF11-induced CREB1 activation and mitochondrial ROS generation necessary for proper osteoclast generation. Association between TMEM64 and SERCA2 in the ER leads to cytosolic Ca(2+) spiking for activation of NFATC1 and production of mitochondrial ROS, thereby triggering Ca(2+) signaling cascades that promote osteoclast differentiation and activation. The sequence is that of Sarcoplasmic/endoplasmic reticulum calcium ATPase 2 (ATP2A2) from Felis catus (Cat).